Reading from the N-terminus, the 405-residue chain is Deoxyguanosinetriphosphate triphosphohydrolase-like protein (405 aa).

In terms of domain architecture, HD spans 75–219 (RLTHTIEVAQ…AAIADDIAYN (145 aa)).

It belongs to the dGTPase family. Type 2 subfamily.

In Rhizobium etli (strain ATCC 51251 / DSM 11541 / JCM 21823 / NBRC 15573 / CFN 42), this protein is Deoxyguanosinetriphosphate triphosphohydrolase-like protein.